Here is a 475-residue protein sequence, read N- to C-terminus: MAAPRPPPARLSGVMVPAPIQDLEALRALTALFKEQRNRETAPRTIFQRVLDILKKSSHAVELACRDPSQVENLASSLQLITECFRCLRNACIECSVNQNSIRNLDTIGVAVDLILLFRELRVEQESLLTAFRCGLQFLGNIASRNEDSQSIVWVHAFPELFLSCLNHPDKKIVAYSSMILFTSLNHERMKELEENLNIAIDVIDAYQKHPESEWPFLIITDLFLKSPELVQAMFPKLNNQERVTLLDLMIAKITSDEPLTKDDIPVFLRHAELIASTFVDQCKTVLKLASEEPPDDEEALATIRLLDVLCEMTVNTELLGYLQVFPGLLERVIDLLRVIHVAGKETTNIFSNCGCVRAEGDISNVANGFKSHLIRLIGNLCYKNKDNQDKVNELDGIPLILDNCNISDSNPFLTQWVIYAIRNLTEDNSQNQDLIAKMEEQGLADASLLKKVGFEVEKKGEKLILKSTRDTPKP.

Omega-N-methylarginine is present on R10. S12 is subject to Phosphoserine; by AURKB. The residue at position 77 (S77) is a Phosphoserine; by PLK1. Position 82 is a phosphothreonine; by PLK1 (T82). S430 carries the phosphoserine modification.

It belongs to the ataxin-10 family. Homooligomer. Interacts with GNB2. Interacts with IQCB1. Interacts with OGT. Post-translationally, polyubiquitinated. In terms of processing, phosphorylation at Ser-12 by AURKB promotes the association of ATXN10 with PLK1. Phosphorylation at Ser-77 and Thr-82 by PLK1 may play a role in the regulation of cytokinesis and may stimulate the proteasome-mediated degradation of ATXN10. As to expression, expressed in the central nervous system.

It localises to the cytoplasm. It is found in the perinuclear region. The protein resides in the midbody. The protein localises to the cytoskeleton. Its subcellular location is the cilium basal body. It localises to the microtubule organizing center. It is found in the centrosome. The protein resides in the centriole. May play a role in the regulation of cytokinesis. May play a role in signaling by stimulating protein glycosylation. Induces neuritogenesis by activating the Ras-MAP kinase pathway and is necessary for the survival of cerebellar neurons. Does not appear to play a major role in ciliogenesis. The chain is Ataxin-10 (ATXN10) from Homo sapiens (Human).